The primary structure comprises 72 residues: Cytochrome b-c1 complex subunit 9 (72 aa).

Over 1–27 the chain is Mitochondrial matrix; that stretch reads MESAARRSGGGVLEGFYRLVMRRTPVY. The helical transmembrane segment at 28 to 53 threads the bilayer; the sequence is VTFVIAGALLGERAVDYGVKTLWEKN. Over 54 to 72 the chain is Mitochondrial intermembrane; sequence NVGKRYEDISVLGQRPVDE.

This sequence belongs to the UQCR10/QCR9 family. In terms of assembly, component of the ubiquinol-cytochrome c oxidoreductase (cytochrome b-c1 complex, complex III, CIII), a multisubunit enzyme composed of 3 respiratory subunits cytochrome b, cytochrome c1 and Rieske protein, 2 core protein subunits, and additional low-molecular weight protein subunits. The complex exists as an obligatory dimer and forms supercomplexes (SCs) in the inner mitochondrial membrane with cytochrome c oxidase (complex IV, CIV).

The protein localises to the mitochondrion inner membrane. Component of the ubiquinol-cytochrome c oxidoreductase, a multisubunit transmembrane complex that is part of the mitochondrial electron transport chain which drives oxidative phosphorylation. The respiratory chain contains 3 multisubunit complexes succinate dehydrogenase (complex II, CII), ubiquinol-cytochrome c oxidoreductase (cytochrome b-c1 complex, complex III, CIII) and cytochrome c oxidase (complex IV, CIV), that cooperate to transfer electrons derived from NADH and succinate to molecular oxygen, creating an electrochemical gradient over the inner membrane that drives transmembrane transport and the ATP synthase. The cytochrome b-c1 complex catalyzes electron transfer from ubiquinol to cytochrome c, linking this redox reaction to translocation of protons across the mitochondrial inner membrane, with protons being carried across the membrane as hydrogens on the quinol. In the process called Q cycle, 2 protons are consumed from the matrix, 4 protons are released into the intermembrane space and 2 electrons are passed to cytochrome c. This Solanum tuberosum (Potato) protein is Cytochrome b-c1 complex subunit 9.